The chain runs to 216 residues: Regulator of G-protein signaling 19 (216 aa).

A compositionally biased stretch (basic and acidic residues) spans 1-19 (MPTPHEAEKQHTGPEEADR). Positions 1–30 (MPTPHEAEKQHTGPEEADRPPSMSSHDAAP) are disordered. At Ser-24 the chain carries Phosphoserine; by CK2. One can recognise an RGS domain in the interval 90–206 (SFDKLMHSPT…LTSPTYRSLL (117 aa)). At Ser-97 the chain carries Phosphoserine. Ser-151 is modified (phosphoserine; by MAPK1 and MAPK3). Residues 207 to 216 (LQGAPQSSEA) form an interaction with GIPC region.

Interacts with GIPC PDZ domain. Interacts with GNAO1. In terms of processing, fatty acylated. Heavily palmitoylated in the cysteine string motif. Phosphorylated, mainly on serine residues.

Its subcellular location is the membrane. Its function is as follows. Inhibits signal transduction by increasing the GTPase activity of G protein alpha subunits thereby driving them into their inactive GDP-bound form. Binds to G-alpha subfamily 1 members, predominantly to G(i)-alpha-3. Activity on G(z)-alpha is inhibited by phosphorylation and palmitoylation of the G-protein. The sequence is that of Regulator of G-protein signaling 19 (Rgs19) from Rattus norvegicus (Rat).